The chain runs to 396 residues: Elongation factor Tu (396 aa).

Residues 10–205 (KTHANIGTIG…AVDDYIPTPE (196 aa)) enclose the tr-type G domain. The segment at 19–26 (GHVDHGKT) is G1. 19-26 (GHVDHGKT) lines the GTP pocket. Residue Thr-26 participates in Mg(2+) binding. The segment at 61–65 (GITIS) is G2. The segment at 82-85 (DCPG) is G3. GTP-binding positions include 82 to 86 (DCPGH) and 137 to 140 (NKCD). The tract at residues 137-140 (NKCD) is G4. Residues 175-177 (SAL) form a G5 region.

It belongs to the TRAFAC class translation factor GTPase superfamily. Classic translation factor GTPase family. EF-Tu/EF-1A subfamily. As to quaternary structure, monomer.

It is found in the cytoplasm. It catalyses the reaction GTP + H2O = GDP + phosphate + H(+). GTP hydrolase that promotes the GTP-dependent binding of aminoacyl-tRNA to the A-site of ribosomes during protein biosynthesis. The polypeptide is Elongation factor Tu (Halalkalibacterium halodurans (strain ATCC BAA-125 / DSM 18197 / FERM 7344 / JCM 9153 / C-125) (Bacillus halodurans)).